The primary structure comprises 137 residues: Phosphatidylinositol N-acetylglucosaminyltransferase subunit P (137 aa).

The next 2 membrane-spanning stretches (helical) occupy residues 16–36 (VYGF…LIWG) and 58–78 (MAMP…YIGL).

It belongs to the PIGP family.

The protein localises to the membrane. The catalysed reaction is a 1,2-diacyl-sn-glycero-3-phospho-(1D-myo-inositol) + UDP-N-acetyl-alpha-D-glucosamine = a 6-(N-acetyl-alpha-D-glucosaminyl)-1-(1,2-diacyl-sn-glycero-3-phospho)-1D-myo-inositol + UDP + H(+). Its pathway is glycolipid biosynthesis; glycosylphosphatidylinositol-anchor biosynthesis. Its function is as follows. Part of the complex catalyzing the transfer of N-acetylglucosamine from UDP-N-acetylglucosamine to phosphatidylinositol, the first step of GPI biosynthesis. This is Phosphatidylinositol N-acetylglucosaminyltransferase subunit P from Arabidopsis thaliana (Mouse-ear cress).